Reading from the N-terminus, the 307-residue chain is Ribosomal protein uL3 glutamine methyltransferase (307 aa).

The protein belongs to the protein N5-glutamine methyltransferase family. PrmB subfamily.

The catalysed reaction is L-glutaminyl-[ribosomal protein uL3] + S-adenosyl-L-methionine = N(5)-methyl-L-glutaminyl-[ribosomal protein uL3] + S-adenosyl-L-homocysteine + H(+). Methylates large ribosomal subunit protein uL3 on a specific glutamine residue. This chain is Ribosomal protein uL3 glutamine methyltransferase, found in Burkholderia pseudomallei (strain K96243).